The following is a 90-amino-acid chain: DNA-binding protein HU (90 aa).

Positions 57-90 (ARKGVNPQTRKPITIPERKVPKFKPGKALKEKVK) are disordered.

This sequence belongs to the bacterial histone-like protein family.

Its function is as follows. Histone-like DNA-binding protein which is capable of wrapping DNA to stabilize it, and thus to prevent its denaturation under extreme environmental conditions. The polypeptide is DNA-binding protein HU (hup) (Thermotoga maritima (strain ATCC 43589 / DSM 3109 / JCM 10099 / NBRC 100826 / MSB8)).